Consider the following 873-residue polypeptide: Calmodulin-dependent glutamylase SidJ (873 aa).

The segment at 16–90 (QSEDNPSETA…TTSTTKQKGP (75 aa)) is disordered. The segment covering 22–58 (SETAVETTDVSTKIKTTDTTQEESSVKTKTVVPTQPG) has biased composition (polar residues). The Mg(2+) site is built by aspartate 542 and aspartate 545. Residues 851–873 (NLSEKSDIDSEKPESERTTDKRL) form a disordered region.

In terms of assembly, interacts with host calmodulin/CALM1; this interaction is required for glutamylase activity. It depends on Mg(2+) as a cofactor.

It carries out the reaction L-glutamyl-[protein] + L-glutamate + ATP = gamma-L-glutamyl-L-glutamyl-[protein] + ADP + phosphate + H(+). It catalyses the reaction (L-glutamyl)(n)-gamma-L-glutamyl-L-glutamyl-[protein] + L-glutamate + ATP = (L-glutamyl)(n+1)-gamma-L-glutamyl-L-glutamyl-[protein] + ADP + phosphate + H(+). With respect to regulation, glytamylation catalyzed by SidJ requires host calmodulin and can be regulated by intracellular changes in Ca2+ concentrations. Also requires ATP. Glutamylase that mediates the covalent attachment of glutamate moieties to SdeA on one of the catalytic residues that is required for its mono-ADP-ribosyltransferase activity. In turn, inhibits SdeA ubiquitinating activity. Also glutamylates related SdeB, SdeC and SidE. Glutamylase activity only occurs in the host since it requires host calmodulin. May also reverse the SdeA-mediated substrate ubiquitination by cleaving the phosphodiester bond that links phosphoribosylated ubiquitin to protein substrates via its deubiquitinase activity. This is Calmodulin-dependent glutamylase SidJ from Legionella pneumophila subsp. pneumophila (strain Philadelphia 1 / ATCC 33152 / DSM 7513).